The chain runs to 434 residues: Vi polysaccharide export inner-membrane protein VexD (434 aa).

Residues 1–50 (MENSERIKKWKEERAKVAQESRASRLQQKEDERALRQTEKSADAKSHHNP) are compositionally biased toward basic and acidic residues. Residues 1–58 (MENSERIKKWKEERAKVAQESRASRLQQKEDERALRQTEKSADAKSHHNPDAGWSATD) form a disordered region. The next 2 helical transmembrane spans lie at 84–104 (LFLYIALPLLVIMLMSWILTS) and 409–429 (WLLFFVLLGITYLVTSLLITI).

Belongs to the BexC/CtrB/KpsE family.

The protein resides in the cell inner membrane. May form an ATP-driven capsule polysaccharide export apparatus, in association with the VexA, VexB and VexC proteins. The sequence is that of Vi polysaccharide export inner-membrane protein VexD (vexD) from Salmonella typhi.